The chain runs to 1011 residues: Beta-galactosidase A (1011 aa).

Positions Met-1–Ala-19 are cleaved as a signal peptide. Residues Tyr-96, Asn-140 to Glu-142, and Asn-199 contribute to the substrate site. Glu-200 (proton donor) is an active-site residue. 2 disulfides stabilise this stretch: Cys-205-Cys-206 and Cys-267-Cys-316. Glu-299 serves as the catalytic Nucleophile. Tyr-365 contributes to the substrate binding site. N-linked (GlcNAc...) asparagine glycans are attached at residues Asn-374, Asn-456, Asn-625, Asn-707, Asn-763, Asn-780, and Asn-917.

Belongs to the glycosyl hydrolase 35 family. Monomer.

It localises to the secreted. The catalysed reaction is Hydrolysis of terminal non-reducing beta-D-galactose residues in beta-D-galactosides.. In terms of biological role, cleaves beta-linked terminal galactosyl residues from gangliosides, glycoproteins, and glycosaminoglycans. Has high in vitro transglycosylation activity with p-nitrophenyl-beta-D-galactopyranoside, methyl-beta-D-galactopyranoside or lactose as a donor and galactose as an acceptor. The sequence is that of Beta-galactosidase A (lacA) from Penicillium sp.